The chain runs to 140 residues: Histone H3-like centromeric protein A (140 aa).

The segment at 1–46 (MGPRRRSRKPEAPRRRSPSPTPTPGPSRRGPSLGASSHQHSRRRQG) is disordered. Gly2 carries the post-translational modification N,N,N-trimethylglycine. A Phosphoserine; by AURKA and AURKB modification is found at Ser7. Residues Ser17, Ser19, and Ser27 each carry the phosphoserine modification. Residues 26–37 (PSRRGPSLGASS) show a composition bias toward low complexity. The tract at residues 39-54 (QHSRRRQGWLKEIRKL) is important for flexibility of DNA ends that protrude from nucleosomes. Position 68 is a phosphoserine (Ser68). The tract at residues 75–116 (CVKFTRGVDFNWQAQALLALQEAAEAFLVHLFEDAYLLTLHA) is CATD.

This sequence belongs to the histone H3 family. As to quaternary structure, component of centromeric nucleosomes, where DNA is wrapped around a histone octamer core. The octamer contains two molecules each of H2A, H2B, CENPA and H4 assembled in one CENPA-H4 heterotetramer and two H2A-H2B heterodimers. CENPA modulates the DNA-binding characteristics of nucleosomes so that protruding DNA ends have higher flexibility than in nucleosomes containing conventional histone H3. Inhibits binding of histone H1 to nucleosomes, since histone H1 binds preferentially to rigid DNA linkers that protrude from nucleosomes. Nucleosomes containing CENPA also contain histone H2A variants such as MACROH2A and H2A.Z/H2AZ1. The CENPA-H4 heterotetramer is more compact and structurally more rigid than corresponding H3-H4 heterotetramers. Can assemble into nucleosomes that contain both CENPA and histone H3.3; these nucleosomes interact with a single CENPC chain. Heterotrimer composed of HJURP, CENPA and histone H4, where HJURP interacts with the dimer formed by CENPA and histone H4 and prevents tetramerization of CENPA and H4. Component of the CENPA-NAC complex, at least composed of CENPA, CENPC, CENPH, CENPM, CENPN, CENPT and CENPU. Interacts (via CATD domain) with HJURP; the interaction is direct and is required for its localization to centromeres. Interacts with CENPC, CENPN and CENPT; interaction is direct. Part of a centromere complex consisting of CENPA, CENPT and CENPW. Identified in centromere complexes containing histones H2A, H2B and H4, and at least CENPA, CENPB, CENPC, CENPT, CENPN, HJURP, SUPT16H, SSRP1 and RSF1. Can self-associate. The CENPA-H4 heterotetramer can bind DNA by itself (in vitro). Interacts with CDK1, PPP1CA and RBBP7. (Microbial infection) Interacts directly with herpes virus HHV-1 protein ICP0. Post-translationally, ubiquitinated. Interaction with herpes virus HSV-1 ICP0 protein, leads to its degradation by the proteasome pathway. In terms of processing, trimethylated by NTMT1 at the N-terminal glycine after cleavage of Met-1. Methylation is low before incorporation into nucleosomes and increases with cell cycle progression, with the highest levels in mitotic nucleosomes. Phosphorylated by CDK1 at Ser-68 during early mitosis; this abolishes association with chromatin and centromeres, prevents interaction with HJURP and thereby prevents premature assembly of CENPA into centromeres. Dephosphorylated at Ser-68 by PPP1CA during late mitosis. Phosphorylation of Ser-7 by AURKA and AURKB during prophase is required for localization of AURKA and AURKB at inner centromere and is essential for normal cytokinesis. Initial phosphorylation during prophase is mediated by AURKA and is maintained by AURKB. Post-translationally, poly-ADP-ribosylated by PARP1.

It is found in the nucleus. The protein resides in the chromosome. It localises to the centromere. Functionally, histone H3-like nucleosomal protein that is specifically found in centromeric nucleosomes. Replaces conventional H3 in the nucleosome core of centromeric chromatin that serves as an assembly site for the inner kinetochore. The presence of CENPA subtly modifies the nucleosome structure and the way DNA is wrapped around the nucleosome and gives rise to protruding DNA ends that are less well-ordered and rigid compared to nucleosomes containing histone H3. May serve as an epigenetic mark that propagates centromere identity through replication and cell division. Required for recruitment and assembly of kinetochore proteins, and as a consequence required for progress through mitosis, chromosome segregation and cytokinesis. The polypeptide is Histone H3-like centromeric protein A (CENPA) (Homo sapiens (Human)).